Here is a 208-residue protein sequence, read N- to C-terminus: Large ribosomal subunit protein uL3 (208 aa).

A disordered region spans residues 134–159 (SKFHREAGSTGHCTTPGRSFKNTTMP). A compositionally biased stretch (polar residues) spans 144-158 (GHCTTPGRSFKNTTM).

The protein belongs to the universal ribosomal protein uL3 family. As to quaternary structure, part of the 50S ribosomal subunit. Forms a cluster with proteins L14 and L19.

One of the primary rRNA binding proteins, it binds directly near the 3'-end of the 23S rRNA, where it nucleates assembly of the 50S subunit. The sequence is that of Large ribosomal subunit protein uL3 from Treponema denticola (strain ATCC 35405 / DSM 14222 / CIP 103919 / JCM 8153 / KCTC 15104).